The following is a 479-amino-acid chain: Ribosomal RNA small subunit methyltransferase F (479 aa).

S-adenosyl-L-methionine contacts are provided by residues Ala128 to Lys134, Glu152, Asp179, and Asp197. Residue Cys250 is the Nucleophile of the active site.

Belongs to the class I-like SAM-binding methyltransferase superfamily. RsmB/NOP family.

Its subcellular location is the cytoplasm. The enzyme catalyses cytidine(1407) in 16S rRNA + S-adenosyl-L-methionine = 5-methylcytidine(1407) in 16S rRNA + S-adenosyl-L-homocysteine + H(+). Its function is as follows. Specifically methylates the cytosine at position 1407 (m5C1407) of 16S rRNA. This is Ribosomal RNA small subunit methyltransferase F from Shewanella halifaxensis (strain HAW-EB4).